A 616-amino-acid chain; its full sequence is Chaperone protein HtpG (616 aa).

Positions M1–R334 are a; substrate-binding. Residues E335 to R549 are b. The segment at I550–N616 is c.

The protein belongs to the heat shock protein 90 family. As to quaternary structure, homodimer.

The protein localises to the cytoplasm. In terms of biological role, molecular chaperone. Has ATPase activity. In Vesicomyosocius okutanii subsp. Calyptogena okutanii (strain HA), this protein is Chaperone protein HtpG.